Reading from the N-terminus, the 1067-residue chain is Sal-like protein 4 (1067 aa).

The disordered stretch occupies residues 1–62 (MSRRKQAKPQ…SEDSIPVKRP (62 aa)). The segment covering 15 to 42 (EEGQGEQPQQLPSPDLAEALAAEEPGAP) has biased composition (low complexity). A Phosphoserine modification is found at Ser53. A C2H2-type 1; atypical zinc finger spans residues 68-90 (HICNKCCAEFFSLSEFMEHKKSC). The disordered stretch occupies residues 115-140 (ALSHQLGSPSNKDSLQENGSSSGDLK). Polar residues predominate over residues 119-137 (QLGSPSNKDSLQENGSSSG). A Glycyl lysine isopeptide (Lys-Gly) (interchain with G-Cter in SUMO1); alternate cross-link involves residue Lys151. A Glycyl lysine isopeptide (Lys-Gly) (interchain with G-Cter in SUMO2); alternate cross-link involves residue Lys151. Glycyl lysine isopeptide (Lys-Gly) (interchain with G-Cter in SUMO2) cross-links involve residues Lys170, Lys185, and Lys291. Ser308 carries the post-translational modification Phosphoserine. Lys317 participates in a covalent cross-link: Glycyl lysine isopeptide (Lys-Gly) (interchain with G-Cter in SUMO1); alternate. Residue Lys317 forms a Glycyl lysine isopeptide (Lys-Gly) (interchain with G-Cter in SUMO2); alternate linkage. Lys377 is covalently cross-linked (Glycyl lysine isopeptide (Lys-Gly) (interchain with G-Cter in SUMO2)). A Glycyl lysine isopeptide (Lys-Gly) (interchain with G-Cter in SUMO1); alternate cross-link involves residue Lys379. Lys379 participates in a covalent cross-link: Glycyl lysine isopeptide (Lys-Gly) (interchain with G-Cter in SUMO2); alternate. 2 consecutive C2H2-type zinc fingers follow at residues 387–409 (HKCR…LRSH) and 415–437 (YVCP…LQRH). Lys441 participates in a covalent cross-link: Glycyl lysine isopeptide (Lys-Gly) (interchain with G-Cter in SUMO2). The disordered stretch occupies residues 471–521 (DESSLSVDAEPVPVTGTPSLGLPQKLTSGPNSRDLMGGSLPNDMQPGPSPE). Lys557 is covalently cross-linked (Glycyl lysine isopeptide (Lys-Gly) (interchain with G-Cter in SUMO2)). C2H2-type zinc fingers lie at residues 573-595 (NECL…YRTH) and 601-623 (FQCK…LGVH). Residues Lys604 and Lys630 each participate in a glycyl lysine isopeptide (Lys-Gly) (interchain with G-Cter in SUMO2) cross-link. Residues 633–655 (HSCPICQKKFTNAVMLQQHIRMH) form a C2H2-type 6 zinc finger. Disordered regions lie at residues 682–716 (ENGS…STVS) and 752–835 (RQSS…SLPP). The segment covering 693-704 (DAAEGMEAEEVC) has biased composition (acidic residues). Polar residues-rich tracts occupy residues 707–716 (DVPSGPSTVS) and 752–761 (RQSSRENSSL). Phosphoserine occurs at positions 785 and 798. Positions 798–809 (SPANSQAGSVKS) are enriched in polar residues. Residues 810 to 829 (RSPEGHKAEGVESCRVDTEG) are compositionally biased toward basic and acidic residues. Lys846 participates in a covalent cross-link: Glycyl lysine isopeptide (Lys-Gly) (interchain with G-Cter in SUMO1); alternate. Lys846 participates in a covalent cross-link: Glycyl lysine isopeptide (Lys-Gly) (interchain with G-Cter in SUMO2); alternate. A C2H2-type 7 zinc finger spans residues 880-902 (HCCTRCGKNFSSASALQIHERTH). Lys906 participates in a covalent cross-link: Glycyl lysine isopeptide (Lys-Gly) (interchain with G-Cter in SUMO2). Residues 908–930 (FVCNICGRAFTTKGNLKVHYMTH) form a C2H2-type 8 zinc finger. Residues Lys942 and Lys957 each participate in a glycyl lysine isopeptide (Lys-Gly) (interchain with G-Cter in SUMO2) cross-link. Ser1029 is subject to Phosphoserine.

It belongs to the sal C2H2-type zinc-finger protein family. Interacts with POU5F1/OCT4. Interacts with NANOG. Interacts with BEND3. Interacts with NSD2 (via PHD-type zinc fingers 1, 2 and 3). Interacts with NRBP1. Post-translationally, sumoylation with both SUMO1 and SUMO2 regulates the stability, subcellular localization, transcriptional activity, and may reduce interaction with POU5F1/OCT4.

It localises to the cytoplasm. It is found in the nucleus. Functionally, transcription factor with a key role in the maintenance and self-renewal of embryonic and hematopoietic stem cells. The chain is Sal-like protein 4 (Sall4) from Mus musculus (Mouse).